The chain runs to 519 residues: Fatty acid--[acyl-carrier-protein] ligase ScoC (519 aa).

Thr-167 lines the Mg(2+) pocket. ATP is bound by residues Ile-216 and Thr-312. Glu-313 contributes to the Mg(2+) binding site. ATP-binding residues include Asp-394 and Lys-411.

The protein belongs to the ATP-dependent AMP-binding enzyme family. The cofactor is Mg(2+).

It carries out the reaction a medium-chain fatty acid + holo-[ACP] + ATP = a medium-chain fatty acyl-[ACP] + AMP + diphosphate. The enzyme catalyses a medium-chain fatty acid + ATP + H(+) = a medium-chain fatty acyl-AMP + diphosphate. It catalyses the reaction a medium-chain fatty acyl-AMP + holo-[ACP] = a medium-chain fatty acyl-[ACP] + AMP + H(+). The catalysed reaction is octanoate + holo-[ACP] + ATP = octanoyl-[ACP] + AMP + diphosphate. It carries out the reaction octanoate + ATP + H(+) = octanoyl-AMP + diphosphate. The enzyme catalyses octanoyl-AMP + holo-[ACP] = octanoyl-[ACP] + AMP + H(+). It catalyses the reaction a (2E)-enoyl fatty acid + holo-[ACP] + ATP = a (2E)-enoyl-[ACP] + AMP + diphosphate. The catalysed reaction is a (2E)-enoyl fatty acid + ATP + H(+) = a (2E)-2-fatty-enoyl-AMP + diphosphate. It carries out the reaction a (2E)-2-fatty-enoyl-AMP + holo-[ACP] = a (2E)-enoyl-[ACP] + AMP + H(+). The enzyme catalyses (2E)-2-butenoate + holo-[ACP] + ATP = (2E)-butenoyl-[ACP] + AMP + diphosphate. It catalyses the reaction (2E)-2-butenoate + ATP + H(+) = (2E)-but-2-enoyl-AMP + diphosphate. The catalysed reaction is (2E)-but-2-enoyl-AMP + holo-[ACP] = (2E)-butenoyl-[ACP] + AMP + H(+). It carries out the reaction a (3R)-3-isocyanyl-fatty acid + holo-[ACP] + ATP = a (3R)-3-isocyanyl-fatty acyl-[ACP] + AMP + diphosphate. The enzyme catalyses a (3R)-3-isocyanyl-fatty acid + ATP + H(+) = a (3R)-3-isocyanyl-fatty acyl-AMP + diphosphate. It catalyses the reaction a (3R)-3-isocyanyl-fatty acyl-AMP + holo-[ACP] = a (3R)-3-isocyanyl-fatty acyl-[ACP] + AMP + H(+). The catalysed reaction is (3R)-3-isocyanylbutanoate + holo-[ACP] + ATP = (3R)-3-isocyanylbutanoyl-[ACP] + AMP + diphosphate. It carries out the reaction (3R)-3-isocyanylbutanoate + ATP + H(+) = (3R)-3-isocyanylbutanoyl-AMP + diphosphate. The enzyme catalyses (3R)-3-isocyanylbutanoyl-AMP + holo-[ACP] = (3R)-3-isocyanylbutanoyl-[ACP] + AMP + H(+). In terms of biological role, acyl:acyl-carrier protein ligase involved in the biosynthesis of a unique class of isonitrile lipopeptides (INLPs). Shows a strong preference for fatty acids with a short/medium-chain length (C4-C8) in vitro, and accepts alpha,beta-unsaturated fatty acids such as crotonate, which seems to be a physiological substrate. Acts twice during the INLP pathway, catalyzing the activation of crotonate ((2E)-2-butenoate) as well as (3R)-3-isocyanylbutanoate as acyl-adenylates (acyl-AMP), and then the acyl transfer to the dedicated acyl-carrier protein ScoB. The protein is Fatty acid--[acyl-carrier-protein] ligase ScoC of Streptomyces coeruleorubidus.